The primary structure comprises 324 residues: uncharacterized protein (324 aa).

The protein to the C-terminal of para-aminobenzoate synthase component I.

This is an uncharacterized protein from Pasteurella multocida (strain Pm70).